Reading from the N-terminus, the 336-residue chain is uncharacterized protein (336 aa).

Residues 1–21 form the signal peptide; sequence MSELVLITGITGFVASHSAEA. Lysine 38 is an NADP(+) binding site. Threonine 153 carries the post-translational modification Phosphothreonine. Tyrosine 167 is an NADP(+) binding site.

Belongs to the NAD(P)-dependent epimerase/dehydratase family. Dihydroflavonol-4-reductase subfamily.

This is an uncharacterized protein from Schizosaccharomyces pombe (strain 972 / ATCC 24843) (Fission yeast).